A 550-amino-acid polypeptide reads, in one-letter code: Methyl-coenzyme M reductase subunit alpha (550 aa).

Q147 provides a ligand contact to coenzyme F430. Residues R225, 256-257, and R270 contribute to the coenzyme B site; that span reads KH. H257 carries the post-translational modification Pros-methylhistidine. R271 carries the post-translational modification 5-methylarginine. Y333 is a coenzyme M binding site. Residue Q400 is modified to 2-methylglutamine. Coenzyme M is bound at residue Y444. Residue G445 is modified to 1-thioglycine. D450 is subject to (Z)-2,3-didehydroaspartate. C452 bears the S-methylcysteine mark.

Belongs to the methyl-coenzyme M reductase alpha subunit family. As to quaternary structure, MCR is a hexamer of two alpha, two beta, and two gamma chains, forming a dimer of heterotrimers. Coenzyme F430 is required as a cofactor. In terms of processing, the alpha subunit contains six modified amino acids near the active site region. Is methylated on His-257, Arg-271, Gln-400 and Cys-452, probably by the action of specific S-adenosylmethionine-dependent methyltransferases. Also contains a thioglycine at position 445, forming a thiopeptide bond. Contains a didehydroaspartate residue at position 450. The methylation on C5 of Arg-271 is a post-translational methylation not essential in vivo, but which plays a role for the stability and structural integrity of MCR.

The protein resides in the cytoplasm. It catalyses the reaction coenzyme B + methyl-coenzyme M = methane + coenzyme M-coenzyme B heterodisulfide. The protein operates within one-carbon metabolism; methyl-coenzyme M reduction; methane from methyl-coenzyme M: step 1/1. Component of the methyl-coenzyme M reductase (MCR) I that catalyzes the reductive cleavage of methyl-coenzyme M (CoM-S-CH3 or 2-(methylthio)ethanesulfonate) using coenzyme B (CoB or 7-mercaptoheptanoylthreonine phosphate) as reductant which results in the production of methane and the mixed heterodisulfide of CoB and CoM (CoM-S-S-CoB). This is the final step in methanogenesis. This Methanothermobacter thermautotrophicus (strain ATCC 29096 / DSM 1053 / JCM 10044 / NBRC 100330 / Delta H) (Methanobacterium thermoautotrophicum) protein is Methyl-coenzyme M reductase subunit alpha (mcrA).